A 241-amino-acid polypeptide reads, in one-letter code: Small ribosomal subunit protein uS3 (241 aa).

A KH type-2 domain is found at 39–107 (IREVLMKNLK…EVVINIVEVR (69 aa)). The segment at 219 to 241 (MAELDHAGGGGGGERRRRERDAA) is disordered. A compositionally biased stretch (basic and acidic residues) spans 231–241 (GERRRRERDAA).

The protein belongs to the universal ribosomal protein uS3 family. In terms of assembly, part of the 30S ribosomal subunit. Forms a tight complex with proteins S10 and S14.

Binds the lower part of the 30S subunit head. Binds mRNA in the 70S ribosome, positioning it for translation. This Beijerinckia indica subsp. indica (strain ATCC 9039 / DSM 1715 / NCIMB 8712) protein is Small ribosomal subunit protein uS3.